The following is a 24-amino-acid chain: Lycosin-I (24 aa).

This sequence belongs to the cationic peptide 04 (cupiennin) family. 05 subfamily. In terms of assembly, monomer in solution. Small size oligomers on the lipid membranes.

The protein resides in the secreted. The protein localises to the target cell membrane. Antimicrobial peptide that inhibits many reference strains of bacteria and fungi. Is potent against Candida species and multidrug-resistant Acinetobacter baumannii (MDRAB). Is probably localized in the cytoplasm after being transported through the cell wall and membrane. Is able to interact with cell membranes and enter into cell plasma to activate the mitochondrial death pathway to sensitize cancer cells for apoptosis, as well as up-regulates p27 to inhibit cell proliferation. It shows very low effect on normal cells, such as erythrocytes, Hek293t cells. It also potently inhibits tumor cell growth in vitro, and suppresses various tumor growth in vivo when tested in human cancer xenograft models. It interacts with the cell membrane and is then internalized into the cytoplasm of cancer cells to initiate the programmable cell death. In addition, this peptide has the therapeutic effects of anti-hypertension by endothelium-dependent vasodilatation via the NO/sGC/cGMP signaling pathway. In vivo, this peptide also shows a significant ability to inhibit T.gondii invasion and proliferation, making it a potential alternative agent for the treatment of toxoplasmosis. This Lycosa singoriensis (Wolf spider) protein is Lycosin-I.